The primary structure comprises 386 residues: Succinate--CoA ligase [ADP-forming] subunit beta (386 aa).

Positions 9–244 (KEILHKFNVP…YDEEVKEEIE (236 aa)) constitute an ATP-grasp domain. Residues lysine 46, 53 to 55 (GRG), glutamate 99, serine 102, and glutamate 107 each bind ATP. Positions 199 and 213 each coordinate Mg(2+). Substrate contacts are provided by residues asparagine 264 and 321-323 (GIM).

Belongs to the succinate/malate CoA ligase beta subunit family. As to quaternary structure, heterotetramer of two alpha and two beta subunits. It depends on Mg(2+) as a cofactor.

The catalysed reaction is succinate + ATP + CoA = succinyl-CoA + ADP + phosphate. It catalyses the reaction GTP + succinate + CoA = succinyl-CoA + GDP + phosphate. It participates in carbohydrate metabolism; tricarboxylic acid cycle; succinate from succinyl-CoA (ligase route): step 1/1. In terms of biological role, succinyl-CoA synthetase functions in the citric acid cycle (TCA), coupling the hydrolysis of succinyl-CoA to the synthesis of either ATP or GTP and thus represents the only step of substrate-level phosphorylation in the TCA. The beta subunit provides nucleotide specificity of the enzyme and binds the substrate succinate, while the binding sites for coenzyme A and phosphate are found in the alpha subunit. In Wolbachia sp. subsp. Brugia malayi (strain TRS), this protein is Succinate--CoA ligase [ADP-forming] subunit beta.